A 229-amino-acid polypeptide reads, in one-letter code: Ribose-5-phosphate isomerase A (229 aa).

Substrate-binding positions include 28-31 (TGST), 85-88 (DGAD), and 98-101 (KGRG). Residue E107 is the Proton acceptor of the active site. K125 is a binding site for substrate.

Belongs to the ribose 5-phosphate isomerase family. As to quaternary structure, homotetramer.

The catalysed reaction is aldehydo-D-ribose 5-phosphate = D-ribulose 5-phosphate. It functions in the pathway carbohydrate degradation; pentose phosphate pathway; D-ribose 5-phosphate from D-ribulose 5-phosphate (non-oxidative stage): step 1/1. With respect to regulation, inhibited by D-4-phosphoerythronic acid. In terms of biological role, involved in the first step of the non-oxidative branch of the pentose phosphate pathway. It catalyzes the reversible conversion of ribose-5-phosphate to ribulose 5-phosphate. The sequence is that of Ribose-5-phosphate isomerase A from Pyrococcus horikoshii (strain ATCC 700860 / DSM 12428 / JCM 9974 / NBRC 100139 / OT-3).